The sequence spans 218 residues: E3 ubiquitin-protein ligase MARCHF3 (218 aa).

Residues 63 to 123 (SPFNDRPMCR…ELCHFRFAVE (61 aa)) form an RING-CH-type zinc finger. Cysteine 71, cysteine 74, cysteine 87, cysteine 89, histidine 97, cysteine 100, cysteine 113, and cysteine 116 together coordinate Zn(2+). Helical transmembrane passes span 145–165 (LFGD…SGWL) and 180–200 (LEAV…LFWT).

Interacts with MARCHF2 and STX6.

The protein localises to the cytoplasmic vesicle membrane. It localises to the early endosome membrane. It carries out the reaction S-ubiquitinyl-[E2 ubiquitin-conjugating enzyme]-L-cysteine + [acceptor protein]-L-lysine = [E2 ubiquitin-conjugating enzyme]-L-cysteine + N(6)-ubiquitinyl-[acceptor protein]-L-lysine.. Its pathway is protein modification; protein ubiquitination. Functionally, E3 ubiquitin-protein ligase which may be involved in endosomal trafficking. E3 ubiquitin ligases accept ubiquitin from an E2 ubiquitin-conjugating enzyme in the form of a thioester and then directly transfer the ubiquitin to targeted substrates. This Mus musculus (Mouse) protein is E3 ubiquitin-protein ligase MARCHF3 (Marchf3).